Reading from the N-terminus, the 191-residue chain is Glycerol-3-phosphate acyltransferase (191 aa).

6 consecutive transmembrane segments (helical) span residues 7-27 (ILVLSYLIGSIPFGLILSYIG), 51-71 (KLAVVTLILDSLKGFVSVMLA), 80-100 (FVFMSALFSIIGHMFPVWLSF), 115-135 (FIEYKFVIYFTIFWIIVFVIF), 139-159 (SLSSIISTISIMLLVYTHYSA), and 161-181 (ESITFLVMSLLVIVQHIENIV).

This sequence belongs to the PlsY family. Probably interacts with PlsX.

The protein localises to the cell inner membrane. It catalyses the reaction an acyl phosphate + sn-glycerol 3-phosphate = a 1-acyl-sn-glycero-3-phosphate + phosphate. It participates in lipid metabolism; phospholipid metabolism. In terms of biological role, catalyzes the transfer of an acyl group from acyl-phosphate (acyl-PO(4)) to glycerol-3-phosphate (G3P) to form lysophosphatidic acid (LPA). This enzyme utilizes acyl-phosphate as fatty acyl donor, but not acyl-CoA or acyl-ACP. This is Glycerol-3-phosphate acyltransferase from Ehrlichia canis (strain Jake).